The primary structure comprises 625 residues: Coagulation factor XI (625 aa).

Positions 1–18 are cleaved as a signal peptide; the sequence is MTLLYQMVHFALFASVAG. 4 consecutive Apple domains span residues 20–103, 110–193, 200–283, and 291–374; these read CVTT…SKQC, CSKD…LKSC, CIRD…LQHC, and CHSS…LRLC. 17 disulfides stabilise this stretch: Cys-20–Cys-103, Cys-46–Cys-76, Cys-50–Cys-56, Cys-110–Cys-193, Cys-136–Cys-165, Cys-140–Cys-146, Cys-200–Cys-283, Cys-226–Cys-255, Cys-230–Cys-236, Cys-291–Cys-374, Cys-317–Cys-346, Cys-321–Cys-327, Cys-380–Cys-500, Cys-416–Cys-432, Cys-514–Cys-581, Cys-545–Cys-560, and Cys-571–Cys-599. Asn-90 and Asn-126 each carry an N-linked (GlcNAc...) asparagine glycan. The Peptidase S1 domain occupies 388–623; sequence IVGGTQSVHG…YVDWILEKTQ (236 aa). His-431 (charge relay system) is an active-site residue. Asn-450 carries an N-linked (GlcNAc...) asparagine glycan. Asp-480 acts as the Charge relay system in catalysis. Asn-491 is a glycosylation site (N-linked (GlcNAc...) asparagine). 547 to 550 is a binding site for heparin; that stretch reads AGYR. Residue Ser-575 is the Charge relay system of the active site.

It belongs to the peptidase S1 family. Plasma kallikrein subfamily. Homodimer; disulfide-linked. After activation the heavy and light chains are also linked by a disulfide bond. Interacts (activated) with F9 (inactive and activated) in calcium-dependent manner. Forms a heterodimer with SERPINA5. In terms of processing, activated by factor XIIa (or XII), which cleaves each polypeptide after Arg-387 into the light chain, which contains the active site, and the heavy chain, which associates with high molecular weight (HMW) kininogen. Activated by F12 (activated); the presence of negatively charged surfaces accelerates activation. Activated by F2 (thrombin); the presence of negatively charged surfaces, such as polyphosphate and dextran sulfate, strongly accelerates activation. Autoactivated; the presence of negatively charged surfaces, such as polyphosphate and dextran sulfate, accelerates autoactivation and autolysis. N-glycosylated on both chains. N-glycosylated sites mainly consist of nonfucosylated sialylated biantennary (in high abundance) and/or triantennary (in low abundance) complex structures.

The protein localises to the secreted. It carries out the reaction Selective cleavage of Arg-|-Ala and Arg-|-Val bonds in factor IX to form factor IXa.. Its activity is regulated as follows. Inhibited by SERPINA5. Factor XI triggers the middle phase of the intrinsic pathway of blood coagulation by activating factor IX. This Bos taurus (Bovine) protein is Coagulation factor XI (F11).